The following is a 126-amino-acid chain: MPDPAKSAPAPKKGSKKAVTKVQKKDGKKRKRSRKESYSVYVYKVLKQVHPDTGISSKAMGIMNSFVNDIFERIAGEASRLAHYNKRSTITSREIQTAVRLLLPGELAKHAVSEGTKAVTKYTSSK.

The segment covering 1–12 (MPDPAKSAPAPK) has biased composition (low complexity). A disordered region spans residues 1-36 (MPDPAKSAPAPKKGSKKAVTKVQKKDGKKRKRSRKE). Pro-2 carries the N-acetylproline modification. The residue at position 6 (Lys-6) is an N6-(2-hydroxyisobutyryl)lysine; alternate. Lys-6 carries the post-translational modification N6-(beta-hydroxybutyryl)lysine; alternate. Position 6 is an N6-acetyllysine; alternate (Lys-6). N6-butyryllysine; alternate is present on Lys-6. Lys-6 bears the N6-crotonyllysine; alternate mark. Lys-6 is subject to N6-lactoyllysine; alternate. Lys-6 is covalently cross-linked (Glycyl lysine isopeptide (Lys-Gly) (interchain with G-Cter in SUMO2); alternate). Ser-7 is modified (ADP-ribosylserine). Lys-12 bears the N6-(beta-hydroxybutyryl)lysine; alternate mark. 2 positions are modified to N6-acetyllysine; alternate: Lys-12 and Lys-13. Lys-12 and Lys-13 each carry N6-crotonyllysine; alternate. N6-lactoyllysine; alternate is present on Lys-12. Position 13 is an N6-(2-hydroxyisobutyryl)lysine; alternate (Lys-13). At Ser-15 the chain carries Phosphoserine; by STK4/MST1. 4 positions are modified to N6-acetyllysine; alternate: Lys-16, Lys-17, Lys-21, and Lys-24. Lys-16, Lys-17, Lys-21, and Lys-24 each carry N6-crotonyllysine; alternate. Residues Lys-16, Lys-17, Lys-21, and Lys-24 each carry the N6-lactoyllysine; alternate modification. Lys-17 is modified (N6-glutaryllysine; alternate). An N6-(2-hydroxyisobutyryl)lysine; alternate mark is found at Lys-21 and Lys-24. The residue at position 21 (Lys-21) is an N6-(beta-hydroxybutyryl)lysine; alternate. Lys-21 carries the N6-butyryllysine; alternate modification. Lys-21 participates in a covalent cross-link: Glycyl lysine isopeptide (Lys-Gly) (interchain with G-Cter in SUMO2); alternate. N6-(2-hydroxyisobutyryl)lysine is present on Lys-25. Position 35 is an N6-(2-hydroxyisobutyryl)lysine; alternate (Lys-35). The residue at position 35 (Lys-35) is an N6-(beta-hydroxybutyryl)lysine; alternate. The residue at position 35 (Lys-35) is an N6-crotonyllysine; alternate. Position 35 is an N6-glutaryllysine; alternate (Lys-35). N6-succinyllysine; alternate is present on Lys-35. A Glycyl lysine isopeptide (Lys-Gly) (interchain with G-Cter in ubiquitin); alternate cross-link involves residue Lys-35. Glu-36 is modified (polyADP-ribosyl glutamic acid). At Ser-37 the chain carries Phosphoserine; by AMPK. Residues Lys-44, Lys-47, and Lys-58 each carry the N6-(2-hydroxyisobutyryl)lysine; alternate modification. Residue Lys-44 is modified to N6-lactoyllysine; alternate. An N6-glutaryllysine; alternate mark is found at Lys-44 and Lys-47. Residue Lys-47 is modified to N6-methyllysine; alternate. Lys-58 is subject to N6,N6-dimethyllysine; alternate. A Dimethylated arginine modification is found at Arg-80. Lys-86 bears the N6-(2-hydroxyisobutyryl)lysine; alternate mark. An N6-acetyllysine; alternate modification is found at Lys-86. The residue at position 86 (Lys-86) is an N6-lactoyllysine; alternate. Lys-86 carries the N6,N6,N6-trimethyllysine; alternate modification. Residues Arg-87 and Arg-93 each carry the omega-N-methylarginine modification. N6-(2-hydroxyisobutyryl)lysine; alternate is present on Lys-109. Lys-109 bears the N6-(beta-hydroxybutyryl)lysine; alternate mark. An N6-lactoyllysine; alternate modification is found at Lys-109. Lys-109 is modified (N6-glutaryllysine; alternate). Position 109 is an N6-methyllysine; alternate (Lys-109). Ser-113 carries an O-linked (GlcNAc) serine glycan. Thr-116 is subject to Phosphothreonine. 2 positions are modified to N6-(2-hydroxyisobutyryl)lysine; alternate: Lys-117 and Lys-121. Lys-117 is subject to N6-(beta-hydroxybutyryl)lysine; alternate. 2 positions are modified to N6-lactoyllysine; alternate: Lys-117 and Lys-121. Lys-117 and Lys-121 each carry N6-glutaryllysine; alternate. An N6-succinyllysine; alternate mark is found at Lys-117 and Lys-121. Lys-117 is subject to N6-methylated lysine; alternate. Residue Lys-121 forms a Glycyl lysine isopeptide (Lys-Gly) (interchain with G-Cter in ubiquitin); alternate linkage.

This sequence belongs to the histone H2B family. In terms of assembly, the nucleosome is a histone octamer containing two molecules each of H2A, H2B, H3 and H4 assembled in one H3-H4 heterotetramer and two H2A-H2B heterodimers. The octamer wraps approximately 147 bp of DNA. Post-translationally, monoubiquitination at Lys-35 (H2BK34Ub) by the MSL1/MSL2 dimer is required for histone H3 'Lys-4' (H3K4me) and 'Lys-79' (H3K79me) methylation and transcription activation at specific gene loci, such as HOXA9 and MEIS1 loci. Similarly, monoubiquitination at Lys-121 (H2BK120Ub) by the RNF20/40 complex gives a specific tag for epigenetic transcriptional activation and is also prerequisite for histone H3 'Lys-4' and 'Lys-79' methylation. It also functions cooperatively with the FACT dimer to stimulate elongation by RNA polymerase II. H2BK120Ub also acts as a regulator of mRNA splicing: deubiquitination by USP49 is required for efficient cotranscriptional splicing of a large set of exons. In terms of processing, phosphorylated on Ser-15 (H2BS14ph) by STK4/MST1 during apoptosis; which facilitates apoptotic chromatin condensation. Also phosphorylated on Ser-15 in response to DNA double strand breaks (DSBs), and in correlation with somatic hypermutation and immunoglobulin class-switch recombination. Phosphorylation at Ser-37 (H2BS36ph) by AMPK in response to stress promotes transcription. GlcNAcylation at Ser-113 promotes monoubiquitination of Lys-121. It fluctuates in response to extracellular glucose, and associates with transcribed genes. Post-translationally, ADP-ribosylated by PARP1 or PARP2 on Ser-7 (H2BS6ADPr) in response to DNA damage. H2BS6ADPr promotes recruitment of CHD1L. Poly ADP-ribosylation on Glu-36 (H2BE35ADPr) by PARP1 regulates adipogenesis: it inhibits phosphorylation at Ser-37 (H2BS36ph), thereby blocking expression of pro-adipogenetic genes. In terms of processing, crotonylation (Kcr) is specifically present in male germ cells and marks testis-specific genes in post-meiotic cells, including X-linked genes that escape sex chromosome inactivation in haploid cells. Crotonylation marks active promoters and enhancers and confers resistance to transcriptional repressors. It is also associated with post-meiotically activated genes on autosomes. Hydroxybutyrylation of histones is induced by starvation. Post-translationally, lactylated in macrophages by EP300/P300 by using lactoyl-CoA directly derived from endogenous or exogenous lactate, leading to stimulates gene transcription.

It is found in the nucleus. Its subcellular location is the chromosome. In terms of biological role, core component of nucleosome. Nucleosomes wrap and compact DNA into chromatin, limiting DNA accessibility to the cellular machineries which require DNA as a template. Histones thereby play a central role in transcription regulation, DNA repair, DNA replication and chromosomal stability. DNA accessibility is regulated via a complex set of post-translational modifications of histones, also called histone code, and nucleosome remodeling. The polypeptide is Histone H2B type 2-B (Mus musculus (Mouse)).